The chain runs to 216 residues: Putative holocytochrome-c1 synthase (216 aa).

Residues 1–46 are disordered; that stretch reads MQPEQLNQEEESKCPVPPEVRDAWLKSHGGKKPSEVHDTPHPTMLP.

Belongs to the cytochrome c-type heme lyase family.

The protein localises to the mitochondrion inner membrane. It carries out the reaction holo-[cytochrome c] = apo-[cytochrome c] + heme b. Functionally, lyase that catalyzes the covalent linking of the heme group to the cytochrome C1 apoprotein to produce the mature functional cytochrome. In Schizosaccharomyces pombe (strain 972 / ATCC 24843) (Fission yeast), this protein is Putative holocytochrome-c1 synthase.